The primary structure comprises 419 residues: Enolase (419 aa).

Gln-161 serves as a coordination point for (2R)-2-phosphoglycerate. Glu-205 functions as the Proton donor in the catalytic mechanism. Asp-240, Glu-283, and Asp-309 together coordinate Mg(2+). Residues Lys-334, Arg-363, Ser-364, and Lys-385 each coordinate (2R)-2-phosphoglycerate. Residue Lys-334 is the Proton acceptor of the active site.

This sequence belongs to the enolase family. Mg(2+) is required as a cofactor.

The protein localises to the cytoplasm. The protein resides in the secreted. It is found in the cell surface. It catalyses the reaction (2R)-2-phosphoglycerate = phosphoenolpyruvate + H2O. It participates in carbohydrate degradation; glycolysis; pyruvate from D-glyceraldehyde 3-phosphate: step 4/5. Functionally, catalyzes the reversible conversion of 2-phosphoglycerate (2-PG) into phosphoenolpyruvate (PEP). It is essential for the degradation of carbohydrates via glycolysis. The polypeptide is Enolase (Saccharolobus islandicus (strain M.16.27) (Sulfolobus islandicus)).